Consider the following 433-residue polypeptide: Glycerol-3-phosphate dehydrogenase [NAD(+)] (433 aa).

NAD(+) contacts are provided by residues G17–G22, F49, and F117. K140 provides a ligand contact to substrate. Residue A173 coordinates NAD(+). A disordered region spans residues I187–E246. Polar residues predominate over residues N208–S227. K283 (proton acceptor) is an active-site residue. NAD(+) contacts are provided by R349 and Q378. Residue R349–N350 coordinates substrate.

Belongs to the NAD-dependent glycerol-3-phosphate dehydrogenase family.

It carries out the reaction sn-glycerol 3-phosphate + NAD(+) = dihydroxyacetone phosphate + NADH + H(+). The polypeptide is Glycerol-3-phosphate dehydrogenase [NAD(+)] (Pyricularia oryzae (strain Y34) (Rice blast fungus)).